A 353-amino-acid chain; its full sequence is MRIEKDKELMNILKIMAPGTPLREGLENILRAKTGGLLILGDSDQILKLVDGGFKINSEYSPSYVYELAKMDGSIVLSSDLKKILCANAQLIPDSSIPTFETGTRHRTADRVAKQTGAIVIAISQRRNIITVYKGGIKYVLRDSSIILARANQALQTLEKYVAVLDRVVNNLNILEFKDIATLFDVLTAIQRSEMVMRIVSEIERYICELGNEGRLIDMQLSELIKSVEEDGILLIRDYCRSNMEYEDIYKQIQGLSSEELLNLDGLSKIIGYTGVPLVDTLISPRGYRMINKIPRIPSNVIENLVANFNQLKCVMEASYEQLDNVEGIGEARAKAIKNGLRRLREQIMLDKV.

Residues 6-144 (DKELMNILKI…GGIKYVLRDS (139 aa)) form the DAC domain. ATP is bound by residues Gly73, Leu91, and 104-108 (TRHRT).

The protein belongs to the DisA family. Homooctamer. The cofactor is Mg(2+).

It catalyses the reaction 2 ATP = 3',3'-c-di-AMP + 2 diphosphate. Its function is as follows. Participates in a DNA-damage check-point that is active prior to asymmetric division when DNA is damaged. DisA forms globular foci that rapidly scan along the chromosomes during sporulation, searching for lesions. When a lesion is present, DisA pauses at the lesion site. This triggers a cellular response that culminates in a temporary block in sporulation initiation. In terms of biological role, also has diadenylate cyclase activity, catalyzing the condensation of 2 ATP molecules into cyclic di-AMP (c-di-AMP). c-di-AMP acts as a signaling molecule that couples DNA integrity with progression of sporulation. The rise in c-di-AMP level generated by DisA while scanning the chromosome, operates as a positive signal that advances sporulation; upon encountering a lesion, the DisA focus arrests at the damaged site and halts c-di-AMP synthesis. This chain is DNA integrity scanning protein DisA, found in Clostridium botulinum (strain 657 / Type Ba4).